The primary structure comprises 132 residues: Small ribosomal subunit protein uS8 (132 aa).

It belongs to the universal ribosomal protein uS8 family. As to quaternary structure, part of the 30S ribosomal subunit. Contacts proteins S5 and S12.

Functionally, one of the primary rRNA binding proteins, it binds directly to 16S rRNA central domain where it helps coordinate assembly of the platform of the 30S subunit. In Stenotrophomonas maltophilia (strain K279a), this protein is Small ribosomal subunit protein uS8.